Reading from the N-terminus, the 515-residue chain is Mucin-like protein Glc1.8b (515 aa).

A signal peptide spans 1–20 (MSQITLIILVLAIGFSCTKS). Over 21 to 467 (HPINSTRDGE…ANDIKKPAFP (447 aa)) the chain is Extracellular. N-linked (GlcNAc...) asparagine; by host glycosylation is found at asparagine 24, asparagine 45, asparagine 51, asparagine 60, asparagine 85, asparagine 93, asparagine 102, asparagine 123, asparagine 129, asparagine 138, asparagine 180, asparagine 201, asparagine 207, asparagine 216, asparagine 258, asparagine 279, asparagine 285, asparagine 294, asparagine 319, asparagine 327, asparagine 336, asparagine 357, asparagine 363, asparagine 372, asparagine 397, asparagine 405, asparagine 413, asparagine 434, and asparagine 441. The disordered stretch occupies residues 80–114 (SKKDENITGQSEINTSAKSQPINSTRDGEDSGTDL). Polar residues predominate over residues 86–104 (ITGQSEINTSAKSQPINST). Residues 314-358 (SKKDENITGQSEINTSAKSQPINSTRDGEDSGTDLKNLLTDPANT) are disordered. Positions 320–338 (ITGQSEINTSAKSQPINST) are enriched in polar residues. The segment at 393-413 (RKDENVTGQSEFNISTNSNLN) is disordered. Residues 468 to 488 (YCIILITFQIVTVGMIIYLVF) traverse the membrane as a helical segment. At 489–515 (RTMRKPCQSERAIPLNSFGFGNNSSYE) the chain is on the cytoplasmic side.

It belongs to the polydnaviridae Glc1.8 protein family.

It localises to the host membrane. Involved in suppression of the insect cellular immune response. Inhibits host hemocyte adhesion and phagocytosis. The polypeptide is Mucin-like protein Glc1.8b (O16) (Microplitis demolitor (Parasitoid wasp)).